The following is an 86-amino-acid chain: MAMTVKKNDNEVRIQWRVADIKIPNNEIKNVTQDQDIHAVPEENGKEISRIGSTFGKTNRVLIDTDQHLYIIYTQNDQKVYNELTK.

This sequence belongs to the UPF0457 family.

In Staphylococcus epidermidis (strain ATCC 35984 / DSM 28319 / BCRC 17069 / CCUG 31568 / BM 3577 / RP62A), this protein is UPF0457 protein SERP1772.